The following is a 562-amino-acid chain: NAD-dependent malic enzyme (562 aa).

Catalysis depends on Y101, which acts as the Proton donor. Position 154 (R154) interacts with NAD(+). Catalysis depends on K172, which acts as the Proton acceptor. Residues E243, D244, and D267 each contribute to the a divalent metal cation site. Residues D267 and N415 each contribute to the NAD(+) site.

This sequence belongs to the malic enzymes family. In terms of assembly, homotetramer. Mg(2+) is required as a cofactor. The cofactor is Mn(2+).

The enzyme catalyses (S)-malate + NAD(+) = pyruvate + CO2 + NADH. It catalyses the reaction oxaloacetate + H(+) = pyruvate + CO2. The polypeptide is NAD-dependent malic enzyme (Shewanella sp. (strain ANA-3)).